The chain runs to 40 residues: Photosystem II reaction center protein J (40 aa).

The helical transmembrane segment at 8–28 (IPLWIIGTVTGILVIGLVGIF) threads the bilayer.

This sequence belongs to the PsbJ family. As to quaternary structure, PSII is composed of 1 copy each of membrane proteins PsbA, PsbB, PsbC, PsbD, PsbE, PsbF, PsbH, PsbI, PsbJ, PsbK, PsbL, PsbM, PsbT, PsbX, PsbY, PsbZ, Psb30/Ycf12, at least 3 peripheral proteins of the oxygen-evolving complex and a large number of cofactors. It forms dimeric complexes.

The protein resides in the plastid. The protein localises to the chloroplast thylakoid membrane. One of the components of the core complex of photosystem II (PSII). PSII is a light-driven water:plastoquinone oxidoreductase that uses light energy to abstract electrons from H(2)O, generating O(2) and a proton gradient subsequently used for ATP formation. It consists of a core antenna complex that captures photons, and an electron transfer chain that converts photonic excitation into a charge separation. This Jasminum nudiflorum (Winter jasmine) protein is Photosystem II reaction center protein J.